The following is a 354-amino-acid chain: Uroporphyrinogen decarboxylase (354 aa).

Residues 27–31 (RQAGR), D77, Y154, T209, and H327 contribute to the substrate site.

The protein belongs to the uroporphyrinogen decarboxylase family. Homodimer.

It is found in the cytoplasm. It catalyses the reaction uroporphyrinogen III + 4 H(+) = coproporphyrinogen III + 4 CO2. The protein operates within porphyrin-containing compound metabolism; protoporphyrin-IX biosynthesis; coproporphyrinogen-III from 5-aminolevulinate: step 4/4. Catalyzes the decarboxylation of four acetate groups of uroporphyrinogen-III to yield coproporphyrinogen-III. In Escherichia coli O17:K52:H18 (strain UMN026 / ExPEC), this protein is Uroporphyrinogen decarboxylase.